Reading from the N-terminus, the 389-residue chain is Cellobiose 2-epimerase (389 aa).

Belongs to the cellobiose 2-epimerase family.

The protein resides in the cytoplasm. The catalysed reaction is D-cellobiose = beta-D-glucosyl-(1-&gt;4)-D-mannopyranose. With respect to regulation, enhanced by Mg(2+) and Ca(2+) ions, ethylenediaminetetraacetic acid, ethylene glycol tetraacetic acid and citrate. Inhibited by Al(3+), Fe(3+), Co(2+), Cu(2+), Zn(2+), Pb(2+) and Ag(+) ions, iodoacetate, 4-chloromercuribenzoate and N-bromosuccinimide. In terms of biological role, catalyzes the reversible epimerization of cellobiose to 4-O-beta-D-glucopyranosyl-D-mannose (Glc-Man). Can also epimerize cellotriose to Glc-Glc-Man, cellotetraose to Glc-Glc-Glc-Man, and lactose to epilactose. The protein is Cellobiose 2-epimerase (ce-ne1) of Ruminococcus albus.